Reading from the N-terminus, the 361-residue chain is S-adenosylmethionine decarboxylase proenzyme (361 aa).

Catalysis depends on residues glutamate 13 and glutamate 16. Residue serine 73 is the Schiff-base intermediate with substrate; via pyruvic acid of the active site. Residue serine 73 is modified to Pyruvic acid (Ser); by autocatalysis. Cysteine 87 (proton donor; for catalytic activity) is an active-site residue. Active-site proton acceptor; for processing activity residues include serine 236 and histidine 249.

It belongs to the eukaryotic AdoMetDC family. Requires pyruvate as cofactor. Is synthesized initially as an inactive proenzyme. Formation of the active enzyme involves a self-maturation process in which the active site pyruvoyl group is generated from an internal serine residue via an autocatalytic post-translational modification. Two non-identical subunits are generated from the proenzyme in this reaction, and the pyruvate is formed at the N-terminus of the alpha chain, which is derived from the carboxyl end of the proenzyme. The post-translation cleavage follows an unusual pathway, termed non-hydrolytic serinolysis, in which the side chain hydroxyl group of the serine supplies its oxygen atom to form the C-terminus of the beta chain, while the remainder of the serine residue undergoes an oxidative deamination to produce ammonia and the pyruvoyl group blocking the N-terminus of the alpha chain.

The enzyme catalyses S-adenosyl-L-methionine + H(+) = S-adenosyl 3-(methylsulfanyl)propylamine + CO2. It functions in the pathway amine and polyamine biosynthesis; S-adenosylmethioninamine biosynthesis; S-adenosylmethioninamine from S-adenosyl-L-methionine: step 1/1. The protein is S-adenosylmethionine decarboxylase proenzyme (SAMDC1) of Nicotiana sylvestris (Wood tobacco).